The chain runs to 411 residues: Snake venom metalloproteinase ACLF (411 aa).

The N-terminal stretch at 1 to 20 is a signal peptide; that stretch reads MIQVLLVTLCLAAFPYQGSS. The propeptide occupies 21 to 189; it reads IILESGNVND…KKAFQLNLTP (169 aa). The 197-residue stretch at 197–393 folds into the Peptidase M12B domain; that stretch reads RYVELVIVAD…NNPQCILNKP (197 aa). Glutamate 200 and aspartate 284 together coordinate Ca(2+). Cystine bridges form between cysteine 308–cysteine 388, cysteine 348–cysteine 372, and cysteine 350–cysteine 355. Histidine 333 is a Zn(2+) binding site. Residue glutamate 334 is part of the active site. Zn(2+) is bound by residues histidine 337 and histidine 343. Residues cysteine 388, asparagine 391, valine 403, asparagine 406, leucine 408, and glutamate 410 each contribute to the Ca(2+) site.

Belongs to the venom metalloproteinase (M12B) family. P-I subfamily. As to quaternary structure, monomer. Zn(2+) is required as a cofactor. Expressed by the venom gland.

The protein resides in the secreted. With respect to regulation, inhibited by EDTA and 1,10-phenanthroline, but not by PMSF. In terms of biological role, snake venom zinc metalloprotease that has fibrinolytic activity. The recombinant enzyme cleaves both alpha- and beta-chains of fibrinogen, but not the gamma-chain. The recombinant protein does not produce hemorrhage in mice. Cleaves the peptide substrate Abz-LVEALYQ-EDDnp at the Ala-Leu bond in vitro. In Agkistrodon contortrix laticinctus (Broad-banded copperhead), this protein is Snake venom metalloproteinase ACLF (ACLPREF).